The following is a 288-amino-acid chain: uncharacterized protein (288 aa).

Low complexity predominate over residues 126-136 (VAAPASTPVAP). 2 disordered regions span residues 126–227 (VAAP…VTSV) and 258–288 (KEKD…SSEE). Basic and acidic residues predominate over residues 143-152 (RKEFKNEKWK). Residues 153-162 (DKKKQGRRRN) are compositionally biased toward basic residues. Positions 180–194 (VAEECLQESSSEEGD) are enriched in acidic residues. The span at 278-288 (TLVHDRISSEE) shows a compositional bias: basic and acidic residues.

It belongs to the chlamydial CPn_0623/CT_504/TC_0791 family.

This is an uncharacterized protein from Chlamydia trachomatis serovar D (strain ATCC VR-885 / DSM 19411 / UW-3/Cx).